The chain runs to 322 residues: Ferric-anguibactin-binding protein FatB (322 aa).

An N-terminal signal peptide occupies residues 1 to 22; the sequence is MFKSTLNIAVAIVCSSLVTLTG. The N-palmitoyl cysteine moiety is linked to residue Cys23. Residue Cys23 is the site of S-diacylglycerol cysteine attachment. In terms of domain architecture, Fe/B12 periplasmic-binding spans 57–322; it reads RVAALDMNEV…IDDIIKGYQS (266 aa).

This sequence belongs to the bacterial solute-binding protein 8 family. Part of an iron transport system composed of the outer membrane receptor FatA, the periplasmic binding protein FatB and the inner membrane proteins FatC and FatD.

The protein localises to the cell inner membrane. Functionally, involved in the uptake of iron in complex with the siderophore anguibactin. Binds ferric-anguibactin in the periplasm and mediates its transport into the cytoplasm. The chain is Ferric-anguibactin-binding protein FatB from Vibrio anguillarum (strain ATCC 68554 / 775) (Listonella anguillarum).